The following is an 81-amino-acid chain: Photosystem I iron-sulfur center (81 aa).

2 4Fe-4S ferredoxin-type domains span residues 2–31 (SHAV…MVPW) and 39–68 (IAAS…IRVY). C11, C14, C17, C21, C48, C51, C54, and C58 together coordinate [4Fe-4S] cluster.

In terms of assembly, the cyanobacterial PSI reaction center is composed of one copy each of PsaA,B,C,D,E,F,I,J,K,L,M and X, and forms trimeric complexes. The cofactor is [4Fe-4S] cluster.

It localises to the cellular thylakoid membrane. It catalyses the reaction reduced [plastocyanin] + hnu + oxidized [2Fe-2S]-[ferredoxin] = oxidized [plastocyanin] + reduced [2Fe-2S]-[ferredoxin]. Apoprotein for the two 4Fe-4S centers FA and FB of photosystem I (PSI); essential for photochemical activity. FB is the terminal electron acceptor of PSI, donating electrons to ferredoxin. The C-terminus interacts with PsaA/B/D and helps assemble the protein into the PSI complex. Required for binding of PsaD and PsaE to PSI. PSI is a plastocyanin/cytochrome c6-ferredoxin oxidoreductase, converting photonic excitation into a charge separation, which transfers an electron from the donor P700 chlorophyll pair to the spectroscopically characterized acceptors A0, A1, FX, FA and FB in turn. The sequence is that of Photosystem I iron-sulfur center from Prochlorococcus marinus (strain MIT 9313).